The chain runs to 183 residues: Putative manganese efflux pump MntP (183 aa).

A run of 6 helical transmembrane segments spans residues 3 to 23, 43 to 63, 66 to 86, 107 to 127, 134 to 154, and 161 to 181; these read TISV…LSIY, TFGI…ILFI, ISLY…LMML, LIIM…TFSI, FLYT…GFIL, and ILGQ…SINI.

Belongs to the MntP (TC 9.B.29) family.

It is found in the cell inner membrane. Probably functions as a manganese efflux pump. The chain is Putative manganese efflux pump MntP from Fusobacterium nucleatum subsp. nucleatum (strain ATCC 25586 / DSM 15643 / BCRC 10681 / CIP 101130 / JCM 8532 / KCTC 2640 / LMG 13131 / VPI 4355).